Reading from the N-terminus, the 375-residue chain is Putative fimbrium tip subunit Fim1C (375 aa).

The N-terminal stretch at 1–16 is a signal peptide; it reads MKLLANIFLSGLAILA. The N-palmitoyl cysteine moiety is linked to residue Cys17. Residue Cys17 is the site of S-diacylglycerol cysteine attachment. Positions 17–47 are excised as a propeptide; sequence CVSCSKDEDPVLPLEGAKLSVAVKASGTATK.

Belongs to the bacteroidetes fimbrillin superfamily. FimA/Mfa1 family. May be part of the fimbrial tip.

It is found in the fimbrium. The protein resides in the cell outer membrane. In terms of biological role, probably a component of the fimbrium tip. Fimbriae are filamentous appendages on the cell surface that mediate cell adhesion and biofilm formation. The sequence is that of Putative fimbrium tip subunit Fim1C from Parabacteroides distasonis (strain ATCC 8503 / DSM 20701 / CIP 104284 / JCM 5825 / NCTC 11152).